The primary structure comprises 206 residues: MRVPAAVTGGCGCGVDGGGGCCRGGGKLADWEEGKDDEMKSVVVKGWTRMAQVVPLHDNASAEDDDDDEEDDDEDDDDDDDEDDEEEAAPPYVMAVDDSSVDRAVITALLRRSKYRDSGKRALEILGSEPNVSMIITDYWMPEMTGYDLLKKIKESSELKQIPVVIMSSENVPTRISRCLEEGAEDFLLKPVRPADISRITSRMLQ.

Positions 53–92 (VVPLHDNASAEDDDDDEEDDDEDDDDDDDEDDEEEAAPPY) are disordered. The span at 61 to 88 (SAEDDDDDEEDDDEDDDDDDDEDDEEEA) shows a compositional bias: acidic residues. The region spanning 92–205 (YVMAVDDSSV…DISRITSRML (114 aa)) is the Response regulatory domain. D138 carries the post-translational modification 4-aspartylphosphate.

This sequence belongs to the ARR family. Type-A subfamily. Two-component system major event consists of a His-to-Asp phosphorelay between a sensor histidine kinase (HK) and a response regulator (RR). In plants, the His-to-Asp phosphorelay involves an additional intermediate named Histidine-containing phosphotransfer protein (HPt). This multistep phosphorelay consists of a His-Asp-His-Asp sequential transfer of a phosphate group between first a His and an Asp of the HK protein, followed by the transfer to a conserved His of the HPt protein and finally the transfer to an Asp in the receiver domain of the RR protein. As to expression, expressed in flowers, and at low levels in roots, mature leaves and shoots.

Functions as a response regulator involved in His-to-Asp phosphorelay signal transduction system. Phosphorylation of the Asp residue in the receiver domain activates the ability of the protein to promote the transcription of target genes. Type-A response regulators seem to act as negative regulators of the cytokinin signaling. The protein is Two-component response regulator ORR7 of Oryza sativa subsp. indica (Rice).